The sequence spans 189 residues: MKYQYFAKKSFLFISMLAAFKTFAFELPSVPFPAPGSDEILFVVRDTTFNTKAPVNVKVSDFWTNRDVKRKPYEDVYGQSVFTTSGTKWLTSYMTVNINDKDYTMAAVSGYKSGHSAVFVKSDQVQLQHSYNSVANFVGEDEDSIPSKMYLDETPEYFVNVEAYESGSGNVLVMCISNKESFFECEHQR.

Positions 1 to 24 (MKYQYFAKKSFLFISMLAAFKTFA) are cleaved as a signal peptide. A disulfide bridge connects residues Cys-175 and Cys-185.

Belongs to the TDH hemolysin family. Homodimer.

Bacterial hemolysins are exotoxins that attack blood cell membranes and cause cell rupture by mechanisms not clearly defined. The chain is Thermostable direct hemolysin (tdh) from Vibrio mimicus.